We begin with the raw amino-acid sequence, 287 residues long: Bifunctional protein FolD (287 aa).

NADP(+) is bound by residues 164–166, Ser189, and Ile230; that span reads GSS.

The protein belongs to the tetrahydrofolate dehydrogenase/cyclohydrolase family. Homodimer.

The enzyme catalyses (6R)-5,10-methylene-5,6,7,8-tetrahydrofolate + NADP(+) = (6R)-5,10-methenyltetrahydrofolate + NADPH. It carries out the reaction (6R)-5,10-methenyltetrahydrofolate + H2O = (6R)-10-formyltetrahydrofolate + H(+). Its pathway is one-carbon metabolism; tetrahydrofolate interconversion. Its function is as follows. Catalyzes the oxidation of 5,10-methylenetetrahydrofolate to 5,10-methenyltetrahydrofolate and then the hydrolysis of 5,10-methenyltetrahydrofolate to 10-formyltetrahydrofolate. The sequence is that of Bifunctional protein FolD from Aliarcobacter butzleri (strain RM4018) (Arcobacter butzleri).